The chain runs to 580 residues: Transcription factor coe2-B (580 aa).

Positions 60–63 (RKSN) are interaction with DNA. The segment at 148-167 (CRVLLTHEVMCSRCCEKKSC) adopts a C5-type zinc-finger fold. 2 interaction with DNA regions span residues 194–201 (NCLKTAGN) and 233–236 (NNSK). Residues 259-341 (PCIKAISPSE…CKGAPGRFIY (83 aa)) enclose the IPT/TIG domain. The disordered stretch occupies residues 455-492 (IRNTSSISPRGYSSSSTPQQSNYSTPSNSMNGYSNVPM). Residues 459–481 (SSISPRGYSSSSTPQQSNYSTPS) show a composition bias toward low complexity. Positions 482–492 (NSMNGYSNVPM) are enriched in polar residues.

This sequence belongs to the COE family. In terms of tissue distribution, in embryos, expressed in precursors of primary neurons. In adults, expressed at high levels in the brain, and at low levels in the somatic muscles, testis, and possibly the spleen.

The protein localises to the nucleus. In terms of biological role, may play a pivotal role in the transcriptional cascade that specifies primary neurons in embryos. Stabilizes the higher neural potential of selected progenitor cells that express neurog2/X-ngnr-1 by maintaining Delta-Notch signaling. Thus ensures the transition between neural competence and irreversible commitment to a neural fate. Also promotes neuronal differentiation by activating neurod1 expression, directly or indirectly. In Xenopus laevis (African clawed frog), this protein is Transcription factor coe2-B.